Here is a 409-residue protein sequence, read N- to C-terminus: Putative lipoate-protein ligase A (409 aa).

The BPL/LPL catalytic domain occupies 146–330; sequence GPDNCRLVFY…RFQKTFKVDG (185 aa). ATP-binding positions include R188, 193–196, and K249; that span reads GTVL. Position 249 (K249) interacts with (R)-lipoate.

It belongs to the LplA family. In terms of assembly, monomer.

The catalysed reaction is L-lysyl-[lipoyl-carrier protein] + (R)-lipoate + ATP = N(6)-[(R)-lipoyl]-L-lysyl-[lipoyl-carrier protein] + AMP + diphosphate + H(+). Its pathway is protein modification; protein lipoylation via exogenous pathway; protein N(6)-(lipoyl)lysine from lipoate: step 1/2. It participates in protein modification; protein lipoylation via exogenous pathway; protein N(6)-(lipoyl)lysine from lipoate: step 2/2. Its function is as follows. Catalyzes both the ATP-dependent activation of exogenously supplied lipoate to lipoyl-AMP and the transfer of the activated lipoyl onto the lipoyl domains of lipoate-dependent enzymes. The sequence is that of Putative lipoate-protein ligase A (AIM22) from Saccharomyces cerevisiae (strain YJM789) (Baker's yeast).